The chain runs to 442 residues: Protein translocase subunit SecY (442 aa).

10 helical membrane passes run 24 to 44, 76 to 96, 125 to 145, 149 to 169, 178 to 198, 212 to 232, 269 to 289, 312 to 332, 363 to 383, and 385 to 405; these read FLFLAIIVYRIGAHIPVPGIN, IFALGIMPYISASIIMQLMTA, VLALVQAIGMSVGLGSQGVAF, FGFYFVAVTTFVAGAMFMMWL, VGNGISMLIFAGIVAGLPRAI, IFALIGVGLLAVAIIAFVVFI, VIPAIFASSILLFPASLGSWF, NILLFTAGIVFFCFFYTALMF, GVLTRLTMFGALYMTAVCLLP, and FLVVAAHVPFYLGGTSLLIVV.

It belongs to the SecY/SEC61-alpha family. As to quaternary structure, component of the Sec protein translocase complex. Heterotrimer consisting of SecY, SecE and SecG subunits. The heterotrimers can form oligomers, although 1 heterotrimer is thought to be able to translocate proteins. Interacts with the ribosome. Interacts with SecDF, and other proteins may be involved. Interacts with SecA.

The protein localises to the cell inner membrane. In terms of biological role, the central subunit of the protein translocation channel SecYEG. Consists of two halves formed by TMs 1-5 and 6-10. These two domains form a lateral gate at the front which open onto the bilayer between TMs 2 and 7, and are clamped together by SecE at the back. The channel is closed by both a pore ring composed of hydrophobic SecY resides and a short helix (helix 2A) on the extracellular side of the membrane which forms a plug. The plug probably moves laterally to allow the channel to open. The ring and the pore may move independently. This chain is Protein translocase subunit SecY, found in Pseudomonas aeruginosa (strain ATCC 15692 / DSM 22644 / CIP 104116 / JCM 14847 / LMG 12228 / 1C / PRS 101 / PAO1).